The sequence spans 157 residues: Protein-export protein SecB (157 aa).

Belongs to the SecB family. As to quaternary structure, homotetramer, a dimer of dimers. One homotetramer interacts with 1 SecA dimer.

It localises to the cytoplasm. Functionally, one of the proteins required for the normal export of preproteins out of the cell cytoplasm. It is a molecular chaperone that binds to a subset of precursor proteins, maintaining them in a translocation-competent state. It also specifically binds to its receptor SecA. The sequence is that of Protein-export protein SecB from Methylobacillus flagellatus (strain ATCC 51484 / DSM 6875 / VKM B-1610 / KT).